The chain runs to 149 residues: MADQLTDDQISEFKEAFSLFDKDGDGCITTKELGTVMRSLGQNPTEAELQDMINEVDADGNGTIDFPEFLNLMARKMKDTDSEEELKEAFRVFDKDQNGFISAAELRHVMTNLGEKLTDEEVDEMIKEADVDGDGQINYEEFVKVMMAK.

EF-hand domains lie at 8-43 (DQIS…LGQN), 44-79 (PTEA…KMKD), 81-116 (DSEE…LGEK), and 117-149 (LTDE…MMAK). D21, D23, D25, C27, E32, D57, D59, N61, T63, E68, D94, D96, N98, E105, D130, D132, D134, Q136, and E141 together coordinate Ca(2+).

This sequence belongs to the calmodulin family. As to quaternary structure, interacts with KCBP and CIP111. Binds to IQD1 and IQD20.

Its subcellular location is the cytoplasm. It localises to the cytoskeleton. Calmodulin mediates the control of a large number of enzymes, ion channels and other proteins by Ca(2+). Among the enzymes to be stimulated by the calmodulin-Ca(2+) complex are a number of protein kinases and phosphatases. This is Calmodulin-2 (CAM2) from Arabidopsis thaliana (Mouse-ear cress).